We begin with the raw amino-acid sequence, 376 residues long: Secreted LysM effector LysM9 (376 aa).

The N-terminal stretch at 1–25 (MGHFHLSNFIALIGILLVGPTATSG) is a signal peptide. Residues 41–89 (SKYVVQAGETCSAIAQAHSITTADIETYNAQSWAWTGCGQISQGDFICL) form the LysM domain. Positions 190 to 219 (SSETSSSMTTSTSATTSVPTTTSTTTTTKT) are disordered.

The protein belongs to the secreted LysM effector family.

Its subcellular location is the secreted. Its function is as follows. Secreted LysM effector that might have a role in sequestration of chitin oligosaccharides (breakdown products of fungal cell walls that are released during invasion and act as triggers of host immunity) to dampen host defense. This chain is Secreted LysM effector LysM9, found in Penicillium expansum (Blue mold rot fungus).